The primary structure comprises 252 residues: 5'-nucleotidase SurE (252 aa).

Residues aspartate 8, aspartate 9, serine 39, and asparagine 95 each contribute to the a divalent metal cation site.

This sequence belongs to the SurE nucleotidase family. The cofactor is a divalent metal cation.

Its subcellular location is the cytoplasm. It carries out the reaction a ribonucleoside 5'-phosphate + H2O = a ribonucleoside + phosphate. Nucleotidase that shows phosphatase activity on nucleoside 5'-monophosphates. In Clostridium botulinum (strain Kyoto / Type A2), this protein is 5'-nucleotidase SurE.